The primary structure comprises 471 residues: Exoglucanase 2 (471 aa).

A signal peptide spans 1–18; the sequence is MIVGILTTLATLATLAAS. Residues 19–24 constitute a propeptide that is removed on maturation; the sequence is VPLEER. Q25 bears the Pyrrolidone carboxylic acid mark. Residues 26 to 62 enclose the CBM1 domain; that stretch reads ACSSVWGQCGGQNWSGPTCCASGSTCVYSNDYYSQCL. Low complexity predominate over residues 64–101; the sequence is GAASSSSSTRAASTTSRVSPTTSRSSSATPPPGSTTTR. Residues 64–108 form a disordered region; the sequence is GAASSSSSTRAASTTSRVSPTTSRSSSATPPPGSTTTRVPPVGSG. The tract at residues 66–106 is linker; the sequence is ASSSSSTRAASTTSRVSPTTSRSSSATPPPGSTTTRVPPVG. The segment at 107–471 is catalytic; it reads SGTATYSGNP…LLTNANPSFL (365 aa). T111 and T121 each carry an O-linked (Man...) threonine glycan. S130, S133, S134, and S139 each carry an O-linked (Man...) serine glycan. Residue T146 is glycosylated (O-linked (Man...) threonine). Cysteines 200 and 259 form a disulfide. D245 (proton donor) is an active-site residue. A glycan (N-linked (GlcNAc) asparagine) is linked at N313. N-linked (GlcNAc...) (high mannose) asparagine glycosylation is present at N334. The cysteines at positions 392 and 439 are disulfide-linked.

This sequence belongs to the glycosyl hydrolase 6 (cellulase B) family. Asn-334 contains mainly a high-mannose-type glycan (Hex(7-9)GlcNAc(2)) in a 3:1 ration with a single GlcNAc. Asn-313 was primarily unglycosylated with a small fraction (18%) bearing a single GlcNAc at this site.

The protein resides in the secreted. The enzyme catalyses Hydrolysis of (1-&gt;4)-beta-D-glucosidic linkages in cellulose and cellotetraose, releasing cellobiose from the non-reducing ends of the chains.. Its function is as follows. Exocellobiohydrolases (CBH) that catalyzes the hydrolysis of 1,4-beta-D-glucosidic bonds in cellulose to release the disaccharide cellobiose. The degradation of cellulose involves an interplay between different cellulolytic enzymes. Hydrolysis starts with endoglucanases (EGs), which cut internal beta-1,4-glucosidic bonds in cellulose to reduce the polymerization degree of the substrate and create new chain ends for exocellobiohydrolases (CBHs). The CBHs release the disaccharide cellobiose from the non-reducing end of the cellulose polymer chain. Finally, beta-1,4-glucosidases hydrolyze the cellobiose and other short cello-oligosaccharides into glucose units. In Hypocrea jecorina (Trichoderma reesei), this protein is Exoglucanase 2 (cbh2).